The primary structure comprises 730 residues: Synaptogenesis protein syg-1 (730 aa).

Positions 1–18 (MVRWQTWPLLLLFQLVTC) are cleaved as a signal peptide. The Extracellular segment spans residues 19 to 551 (QQLQQRIVEA…WIVITAKFDR (533 aa)). Ig-like domains are found at residues 23–123 (QRIV…AKLT), 131–265 (PKIV…VKLS), 270–352 (PQIN…IKLN), 357–433 (ARIM…QILS), and 441–540 (PPTV…RNIL). 5 disulfide bridges follow: Cys44/Cys104, Cys152/Cys246, Cys292/Cys336, Cys378/Cys420, and Cys462/Cys519. Asn93 and Asn206 each carry an N-linked (GlcNAc...) asparagine glycan. A helical transmembrane segment spans residues 552–572 (MVALAIISAGVLLVSLLCCLC). Residues 573–730 (MCRSNCRSRK…RPISRTSTHV (158 aa)) lie on the Cytoplasmic side of the membrane.

This sequence belongs to the immunoglobulin superfamily. In terms of assembly, interacts with skr-1. Interacts with syg-2. Interacts with the WAVE regulatory complex; the interaction leads to formation of a synaptic F-actin network that is required for synapse formation and axon branching. As to expression, expression in head motor neurons, occasionally in HSN neurons and weakly in other cells in the vulval region. Expressed in the primary synapse region of HSNL motor neuron.

The protein localises to the cell membrane. It localises to the cell projection. The protein resides in the axon. It is found in the synapse. In terms of biological role, cell adhesion protein. Involved in synapse formation in the HSNL egg-laying motor neuron. Inhibits assembly of the SCF(sel-10) E3 ubiquitin ligase complex at synapses, and protects them from elimination. Also required for F-actin assembly at the synaptic region and for axon branch formation. The protein is Synaptogenesis protein syg-1 of Caenorhabditis elegans.